The sequence spans 112 residues: MSAEVPEAASAEEQKEMEDKVTSPEKAEEAKLKARYPHLGQKPGGSDFLRKRLQKGQKYFDSGDYNMAKAKMKNKQLPTAAPDKTEVTGDHIPTPQDLPQRKPSLVASKLAG.

The residue at position 1 (methionine 1) is an N-acetylmethionine. A compositionally biased stretch (low complexity) spans 1–11 (MSAEVPEAASA). Residues 1–49 (MSAEVPEAASAEEQKEMEDKVTSPEKAEEAKLKARYPHLGQKPGGSDFL) form a disordered region. Serine 2 carries the post-translational modification N-acetylserine. 2 positions are modified to phosphoserine: serine 2 and serine 23. Positions 12–32 (EEQKEMEDKVTSPEKAEEAKL) are enriched in basic and acidic residues. Serine 62 and serine 104 each carry phosphoserine; by GWL. Residues 73 to 112 (KNKQLPTAAPDKTEVTGDHIPTPQDLPQRKPSLVASKLAG) are disordered. Serine 104 is subject to Phosphoserine; by PKA. Lysine 109 is modified (N6-acetyllysine).

Belongs to the endosulfine family. Interacts (when phosphorylated at Ser-62) with PPP2R2D. Interacts with SNCA. Interacts with PPP2R2A; the interaction is direct and this interaction inhibits PP2A activity. Post-translationally, phosphorylation at Ser-62 by MASTL/GWL during mitosis is essential for interaction with PPP2R2D (PR55-delta) and subsequent inactivation of PP2A. Phosphorylated by PKA.

It is found in the cytoplasm. In terms of biological role, protein phosphatase inhibitor that specifically inhibits protein phosphatase 2A (PP2A) during mitosis. Inhibition of PP2A is enhanced when ARPP19 is phosphorylated. When phosphorylated at Ser-62 during mitosis, specifically interacts with PPP2R2D (PR55-delta) and inhibits its activity, leading to inactivation of PP2A, an essential condition to keep cyclin-B1-CDK1 activity high during M phase. May indirectly enhance GAP-43 expression. This Homo sapiens (Human) protein is cAMP-regulated phosphoprotein 19 (ARPP19).